Consider the following 995-residue polypeptide: Protein translocase subunit SecA (995 aa).

Residues Gln-86, 104–108 (GEGKT), and Asp-535 each bind ATP. Residues 883 to 911 (AQTVSSDGNGEVVRKPQRRSTPQIGRNEL) form a disordered region. Positions 912, 914, 923, and 924 each coordinate Zn(2+). A disordered region spans residues 939-995 (PSAPPASKALKSTPATQTAVAEEAAKIQAAINSGKLPPTQTTPRGRQAPSVPRGKKR). Low complexity predominate over residues 957 to 969 (AVAEEAAKIQAAI).

It belongs to the SecA family. As to quaternary structure, monomer and homodimer. Part of the essential Sec protein translocation apparatus which comprises SecA, SecYEG and auxiliary proteins SecDF. Other proteins may also be involved. The cofactor is Zn(2+).

It is found in the cell membrane. Its subcellular location is the cytoplasm. It carries out the reaction ATP + H2O + cellular proteinSide 1 = ADP + phosphate + cellular proteinSide 2.. In terms of biological role, part of the Sec protein translocase complex. Interacts with the SecYEG preprotein conducting channel. Has a central role in coupling the hydrolysis of ATP to the transfer of proteins into and across the cell membrane, serving as an ATP-driven molecular motor driving the stepwise translocation of polypeptide chains across the membrane. The sequence is that of Protein translocase subunit SecA from Chloroflexus aurantiacus (strain ATCC 29366 / DSM 635 / J-10-fl).